The chain runs to 515 residues: Bifunctional purine biosynthesis protein PurH (515 aa).

Positions 1 to 145 constitute an MGS-like domain; the sequence is MTKRALISVS…KNHASVTVVV (145 aa).

It belongs to the PurH family.

The catalysed reaction is (6R)-10-formyltetrahydrofolate + 5-amino-1-(5-phospho-beta-D-ribosyl)imidazole-4-carboxamide = 5-formamido-1-(5-phospho-D-ribosyl)imidazole-4-carboxamide + (6S)-5,6,7,8-tetrahydrofolate. The enzyme catalyses IMP + H2O = 5-formamido-1-(5-phospho-D-ribosyl)imidazole-4-carboxamide. It functions in the pathway purine metabolism; IMP biosynthesis via de novo pathway; 5-formamido-1-(5-phospho-D-ribosyl)imidazole-4-carboxamide from 5-amino-1-(5-phospho-D-ribosyl)imidazole-4-carboxamide (10-formyl THF route): step 1/1. It participates in purine metabolism; IMP biosynthesis via de novo pathway; IMP from 5-formamido-1-(5-phospho-D-ribosyl)imidazole-4-carboxamide: step 1/1. The sequence is that of Bifunctional purine biosynthesis protein PurH from Streptococcus pyogenes serotype M6 (strain ATCC BAA-946 / MGAS10394).